A 447-amino-acid chain; its full sequence is Glycylpeptide N-tetradecanoyltransferase (447 aa).

Tetradecanoyl-CoA is bound by residues 38–41, 171–173, and 179–183; these read YKFW, LCV, and SKRLA. The active-site Proton acceptor; via carboxylate is the leucine 447.

This sequence belongs to the NMT family. Monomer.

The protein localises to the cytoplasm. It carries out the reaction N-terminal glycyl-[protein] + tetradecanoyl-CoA = N-tetradecanoylglycyl-[protein] + CoA + H(+). In terms of biological role, adds a myristoyl group to the N-terminal glycine residue of certain cellular proteins. This is Glycylpeptide N-tetradecanoyltransferase (NMT1) from Kluyveromyces lactis (strain ATCC 8585 / CBS 2359 / DSM 70799 / NBRC 1267 / NRRL Y-1140 / WM37) (Yeast).